The primary structure comprises 449 residues: SUPPRESSOR OF GAMMA RESPONSE 1 (449 aa).

In terms of domain architecture, NAC spans 58–211 (LPRGVKFDPS…DYVVSKIFYQ (154 aa)). The DNA-binding element occupies 167-217 (RGCKKIMVLYGGKAVKTNWVMHQYHLGIEEDEKEGDYVVSKIFYQQPQQLV). Positions 324–336 (DDKEEQEKDRDNE) are enriched in basic and acidic residues. Positions 324–348 (DDKEEQEKDRDNENQGEEDPTWFDS) are disordered.

In terms of processing, phosphorylated in a DNA stress-independent manner. Hyperphosphorylated on SQ motifs upon double-strand breaks, H(2)O(2) or zeocin treatments. Hyperphosphorylation is required for SOG1 function, and unlike constitutive phosphorylation, is ATM dependent. In terms of tissue distribution, expressed in shoot and root apical meristems, in lateral root primordia, in the vasculature of young leaves and in the root stele.

Its subcellular location is the nucleus. Its function is as follows. Transcription factor regulating the transcriptional activation response to gamma irradiation. Required for stem-cell death induced by UVB or by gamma irradiation. Not required for ATM activation, but participates in pathways governed by both ATM and ATR sensor kinases. Involved in DNA damage response (DDR) system that regulates cell cycle arrest. Functional homolog of animal p53. Regulates SMR5 and SMR7 transcription. Regulates DNA repair and cytokinin signaling separately and plays a key role in controlling lateral root formation under genotoxic stress. The sequence is that of SUPPRESSOR OF GAMMA RESPONSE 1 from Arabidopsis thaliana (Mouse-ear cress).